The chain runs to 395 residues: Argininosuccinate synthase (395 aa).

8-16 (AYSGGLDTS) contributes to the ATP binding site. L-citrulline contacts are provided by Tyr86 and Ser91. Position 116 (Gly116) interacts with ATP. L-aspartate-binding residues include Thr118, Asn122, and Asp123. Residue Asn122 participates in L-citrulline binding. Residues Arg126, Ser172, Ser181, Glu257, and Tyr269 each contribute to the L-citrulline site.

Belongs to the argininosuccinate synthase family. Type 1 subfamily. Homotetramer.

It is found in the cytoplasm. The catalysed reaction is L-citrulline + L-aspartate + ATP = 2-(N(omega)-L-arginino)succinate + AMP + diphosphate + H(+). Its pathway is amino-acid biosynthesis; L-arginine biosynthesis; L-arginine from L-ornithine and carbamoyl phosphate: step 2/3. The protein is Argininosuccinate synthase of Methanosarcina barkeri (strain Fusaro / DSM 804).